Here is a 324-residue protein sequence, read N- to C-terminus: tRNA uridine(34) hydroxylase (324 aa).

The 95-residue stretch at 145–239 folds into the Rhodanese domain; it reads NDKKTIFIDM…YVHDARKNGL (95 aa). Cys199 serves as the catalytic Cysteine persulfide intermediate.

The protein belongs to the TrhO family.

It carries out the reaction uridine(34) in tRNA + AH2 + O2 = 5-hydroxyuridine(34) in tRNA + A + H2O. Its function is as follows. Catalyzes oxygen-dependent 5-hydroxyuridine (ho5U) modification at position 34 in tRNAs. In Buchnera aphidicola subsp. Acyrthosiphon pisum (strain APS) (Acyrthosiphon pisum symbiotic bacterium), this protein is tRNA uridine(34) hydroxylase.